A 1058-amino-acid polypeptide reads, in one-letter code: Bromodomain-containing protein 1 (1058 aa).

Over residues M1–A12 the composition is skewed to basic residues. The disordered stretch occupies residues M1 to P26. The segment at L31–S80 is interaction with KAT7/HBO1 and histones. The tract at residues H92–A116 is disordered. Phosphoserine is present on S128. The PHD-type 1 zinc finger occupies D214–S264. The segment at P268–V301 adopts a C2HC pre-PHD-type zinc-finger fold. The PHD-type 2 zinc finger occupies L325–T389. An N6-acetyllysine mark is found at K368, K516, and K519. Residues K554 and K594 each participate in a glycyl lysine isopeptide (Lys-Gly) (interchain with G-Cter in SUMO2) cross-link. The 105-residue stretch at L562 to A666 folds into the Bromo domain. 2 disordered regions span residues L755–G776 and L791–F868. S803 carries the phosphoserine modification. The segment covering S852–S867 has biased composition (low complexity). K903 bears the N6-acetyllysine mark. R906 carries the phosphoserine modification. The region spanning P929–D1012 is the PWWP domain. Phosphoserine occurs at positions 1052 and 1055.

As to quaternary structure, component of some HBO1 complex composed of KAT7/HBO1, MEAF6, ING4 and BRD1/BRPF2. Component of the MOZ/MORF complex composed at least of ING5, KAT6A, KAT6B, MEAF6 and one of BRPF1, BRD1/BRPF2 and BRPF3. Interacts (via PHD-type zinc finger domain) with unmodified histone H3. Interacts (via PWWP domain) with dimethylated and trimethylated 'Lys-79' on histone H3. As to expression, highly expressed in testis.

The protein localises to the nucleus. The protein resides in the chromosome. Scaffold subunit of various histone acetyltransferase (HAT) complexes, such as the MOZ/MORF and HBO1 complexes, that acts as a regulator of hematopoiesis. Plays a key role in HBO1 complex by directing KAT7/HBO1 specificity towards histone H3 'Lys-14' acetylation (H3K14ac), thereby promoting erythroid differentiation. The polypeptide is Bromodomain-containing protein 1 (Homo sapiens (Human)).